Consider the following 348-residue polypeptide: Dihydroorotase (348 aa).

His14 and His16 together coordinate Zn(2+). Substrate-binding positions include 16–18 (HLR) and Asn42. 3 residues coordinate Zn(2+): Lys100, His137, and His175. At Lys100 the chain carries N6-carboxylysine. His137 contacts substrate. Leu220 contacts substrate. Residue Asp248 coordinates Zn(2+). Residue Asp248 is part of the active site. Substrate contacts are provided by His252 and Ala264.

Belongs to the metallo-dependent hydrolases superfamily. DHOase family. Class II DHOase subfamily. In terms of assembly, homodimer. Zn(2+) is required as a cofactor.

The enzyme catalyses (S)-dihydroorotate + H2O = N-carbamoyl-L-aspartate + H(+). The protein operates within pyrimidine metabolism; UMP biosynthesis via de novo pathway; (S)-dihydroorotate from bicarbonate: step 3/3. In terms of biological role, catalyzes the reversible cyclization of carbamoyl aspartate to dihydroorotate. The polypeptide is Dihydroorotase (Pseudomonas paraeruginosa (strain DSM 24068 / PA7) (Pseudomonas aeruginosa (strain PA7))).